The following is a 77-amino-acid chain: Dermatoxin-S1 (77 aa).

A signal peptide spans 1-22 (MAFLKKSLFLILFLGLVPLSFC). Positions 23 to 44 (ENDKREGENEEEQDDDQSEEKR) are excised as a propeptide. Gln-76 is modified (glutamine amide).

Expressed by the skin glands.

The protein localises to the secreted. The protein resides in the target cell membrane. Its function is as follows. Antimicrobial peptide with potent activity against Gram-positive bacteria B.megaterium, C.glutamicum and S.aureus and mollicutes A.laidlawii and S.melliferum. Less active against Gram-negative bacteria B.cepacia, P.aeruginosa, S.typhimurium and S.meliloti. Probably acts by disturbing membrane functions with its amphipathic structure. The sequence is that of Dermatoxin-S1 from Phyllomedusa sauvagei (Sauvage's leaf frog).